The sequence spans 243 residues: Triosephosphate isomerase (243 aa).

9–11 contributes to the substrate binding site; sequence NWK. His-96 acts as the Electrophile in catalysis. The Proton acceptor role is filled by Glu-165. Substrate contacts are provided by residues Gly-171, Ser-204, and 225–226; that span reads GG.

The protein belongs to the triosephosphate isomerase family. As to quaternary structure, homodimer.

Its subcellular location is the cytoplasm. It carries out the reaction D-glyceraldehyde 3-phosphate = dihydroxyacetone phosphate. Its pathway is carbohydrate biosynthesis; gluconeogenesis. It participates in carbohydrate degradation; glycolysis; D-glyceraldehyde 3-phosphate from glycerone phosphate: step 1/1. Involved in the gluconeogenesis. Catalyzes stereospecifically the conversion of dihydroxyacetone phosphate (DHAP) to D-glyceraldehyde-3-phosphate (G3P). This Synechococcus sp. (strain WH7803) protein is Triosephosphate isomerase.